A 126-amino-acid chain; its full sequence is Large ribosomal subunit protein bL19 (126 aa).

This sequence belongs to the bacterial ribosomal protein bL19 family.

Functionally, this protein is located at the 30S-50S ribosomal subunit interface and may play a role in the structure and function of the aminoacyl-tRNA binding site. The polypeptide is Large ribosomal subunit protein bL19 (Nitrobacter winogradskyi (strain ATCC 25391 / DSM 10237 / CIP 104748 / NCIMB 11846 / Nb-255)).